A 675-amino-acid polypeptide reads, in one-letter code: Methionine--tRNA ligase (675 aa).

The short motif at 15–25 (PYANGSIHLGH) is the 'HIGH' region element. 4 residues coordinate Zn(2+): Cys-146, Cys-149, Cys-159, and Cys-162. Positions 332-336 (KMSKS) match the 'KMSKS' region motif. Lys-335 provides a ligand contact to ATP. Residues 573 to 675 (DFAKVDMRIA…SGAQPGMQVK (103 aa)) form the tRNA-binding domain.

This sequence belongs to the class-I aminoacyl-tRNA synthetase family. MetG type 1 subfamily. As to quaternary structure, homodimer. Zn(2+) serves as cofactor.

It is found in the cytoplasm. It catalyses the reaction tRNA(Met) + L-methionine + ATP = L-methionyl-tRNA(Met) + AMP + diphosphate. Is required not only for elongation of protein synthesis but also for the initiation of all mRNA translation through initiator tRNA(fMet) aminoacylation. In Yersinia pseudotuberculosis serotype O:3 (strain YPIII), this protein is Methionine--tRNA ligase.